Consider the following 108-residue polypeptide: Cyclin-dependent protein kinase inhibitor SMR13 (108 aa).

In terms of biological role, probable cyclin-dependent protein kinase (CDK) inhibitor that functions as a repressor of mitosis in the endoreduplication cell cycle. This chain is Cyclin-dependent protein kinase inhibitor SMR13, found in Arabidopsis thaliana (Mouse-ear cress).